Reading from the N-terminus, the 320-residue chain is MPSISVRRLFDDNQYKLQLAWAAGNSGADNRIGVEADKPVLALVGHLNFIHPNQIQVVGLAESEYLNRLESGETGYQFGDLFDISMSLVIVANDLPVSPGLRDYCHKNDIPLLTSKLESPYLMDVLRIYLQRTLAASSVKHGVFLDVFEIGVLITGHSGLGKSELALELISRGHSLIADDAVELFRIGPETLEGRCSPMLRDFLEVRGLGILNIRHIFGETSIRPKKILQLIINLVEADDEYMKQLDRLSIRTETESILNVNVRSVTLPVAVGRNLAVLVEAAVRNYILQLRGKDSTREFLERHQTQLKENEQNHENRPD.

Catalysis depends on residues His-141 and Lys-162. Position 156–163 (156–163 (GHSGLGKS)) interacts with ATP. Ser-163 serves as a coordination point for Mg(2+). Residue Asp-180 is the Proton acceptor; for phosphorylation activity. Proton donor; for dephosphorylation activity of the active site. Residues 204–213 (LEVRGLGILN) are important for the catalytic mechanism of both phosphorylation and dephosphorylation. Position 205 (Glu-205) interacts with Mg(2+). The active site involves Arg-248. Residues 269–274 (PVAVGR) form an important for the catalytic mechanism of dephosphorylation region.

It belongs to the HPrK/P family. Homohexamer. Requires Mg(2+) as cofactor.

The enzyme catalyses [HPr protein]-L-serine + ATP = [HPr protein]-O-phospho-L-serine + ADP + H(+). It catalyses the reaction [HPr protein]-O-phospho-L-serine + phosphate + H(+) = [HPr protein]-L-serine + diphosphate. In terms of biological role, catalyzes the ATP- as well as the pyrophosphate-dependent phosphorylation of a specific serine residue in HPr, a phosphocarrier protein of the phosphoenolpyruvate-dependent sugar phosphotransferase system (PTS). HprK/P also catalyzes the pyrophosphate-producing, inorganic phosphate-dependent dephosphorylation (phosphorolysis) of seryl-phosphorylated HPr (P-Ser-HPr). This is HPr kinase/phosphorylase from Neisseria gonorrhoeae (strain ATCC 700825 / FA 1090).